We begin with the raw amino-acid sequence, 1030 residues long: F-box/WD repeat-containing protein 10 (1030 aa).

The F-box domain maps to 280–329 (RDFIRDLPLHLSKYILRMLDKHSLNRCIFVSQHWATLAQQVKVDQSMHSF). WD repeat units lie at residues 466–505 (GHAGSVRALFLSEEDNILLSGSYDLSIRYWDVKTGACVRI), 508–547 (GHQGTITCLDVYKNRLVSGAKDGQVKEWDIETGKCLKTFK), 549–584 (KDPILAAKISETYIVSSCERGIVKVWHVVTAQLQKT), 587–624 (GHEGAVKCLFFNEWHLVSGGADGLVMAWSMVGKYERCL), and 626–667 (AFKH…KVIK). The segment at 709-773 (KNKVKKSKDK…LSSDDMETPV (65 aa)) is disordered. Residues 716 to 733 (KDKEEEREETSLGDEHSR) are compositionally biased toward basic and acidic residues. A compositionally biased stretch (polar residues) spans 734 to 749 (STIQGHSLKDSVSSKQ). Residues 963 to 992 (FMLMTVKEEKEFAEAKMKEYEASVSTKEVD) adopt a coiled-coil conformation.

Functionally, probable substrate-recognition component of a SCF (SKP1-CUL1-F-box protein)-type E3 ubiquitin ligase complex which mediates the ubiquitination and subsequent proteasomal degradation of target proteins. Overexpression is leading to degradation of CBX5 and CBX1. The protein is F-box/WD repeat-containing protein 10 (Fbxw10) of Mus musculus (Mouse).